A 193-amino-acid polypeptide reads, in one-letter code: Interferon epsilon (193 aa).

Residues 1-21 (MINKSFFEIMLVLLASSTGFS) form the signal peptide. The cysteines at positions 53 and 163 are disulfide-linked. N-linked (GlcNAc...) asparagine glycosylation occurs at Asn-139.

It belongs to the alpha/beta interferon family.

Its subcellular location is the secreted. Its function is as follows. Type I interferon required for maintaining basal levels of IFN-regulated genes, including 2'-5'-oligoadenylate synthetase, IRF7 and ISG15, in the female reproductive tract. Directly mediates protection against viral and bacterial genital infections. The chain is Interferon epsilon (IFNE) from Sus scrofa (Pig).